A 512-amino-acid polypeptide reads, in one-letter code: Serine/threonine-protein kinase SSN3 (512 aa).

Disordered regions lie at residues 1–22 and 75–94; these read MNNHYHPTGHRDAKTYAGDRPW and AEVSYQQPRPYPTGRGTGSM. Residues 106–455 form the Protein kinase domain; that stretch reads YKVVGFISSG…AAAALQHPFF (350 aa). ATP is bound by residues 112–120 and Lys136; that span reads ISSGTYGRV. Asp238 functions as the Proton acceptor in the catalytic mechanism. 2 disordered regions span residues 368-388 and 476-512; these read QPPIHHGGHHGHHYQSQRQAA and RRVSQDDNDIRTSSLPGTKRSGLPDDSLRPGKRVKEG. A compositionally biased stretch (basic residues) spans 373–382; that stretch reads HGGHHGHHYQ. Basic and acidic residues-rich tracts occupy residues 476–485 and 497–512; these read RRVSQDDNDI and GLPDDSLRPGKRVKEG.

It belongs to the protein kinase superfamily. CMGC Ser/Thr protein kinase family. CDC2/CDKX subfamily. As to quaternary structure, component of the SRB8-11 complex, a regulatory module of the Mediator complex. Mg(2+) is required as a cofactor.

The protein resides in the nucleus. It catalyses the reaction L-seryl-[protein] + ATP = O-phospho-L-seryl-[protein] + ADP + H(+). The catalysed reaction is L-threonyl-[protein] + ATP = O-phospho-L-threonyl-[protein] + ADP + H(+). It carries out the reaction [DNA-directed RNA polymerase] + ATP = phospho-[DNA-directed RNA polymerase] + ADP + H(+). Functionally, component of the SRB8-11 complex. The SRB8-11 complex is a regulatory module of the Mediator complex which is itself involved in regulation of basal and activated RNA polymerase II-dependent transcription. The SRB8-11 complex may be involved in the transcriptional repression of a subset of genes regulated by Mediator. It may inhibit the association of the Mediator complex with RNA polymerase II to form the holoenzyme complex. The SRB8-11 complex phosphorylates the C-terminal domain (CTD) of the largest subunit of RNA polymerase II. The polypeptide is Serine/threonine-protein kinase SSN3 (SSN3) (Chaetomium globosum (strain ATCC 6205 / CBS 148.51 / DSM 1962 / NBRC 6347 / NRRL 1970) (Soil fungus)).